A 374-amino-acid chain; its full sequence is Dispase autolysis-inducing protein (374 aa).

The first 26 residues, Met-1–Ala-26, serve as a signal peptide directing secretion.

The protein localises to the secreted. In terms of biological role, induces autolysis of dispase and thermolysin. This chain is Dispase autolysis-inducing protein (daip), found in Streptomyces mobaraensis (Streptoverticillium mobaraense).